The chain runs to 1108 residues: AP-3 complex subunit beta (1108 aa).

4 HEAT repeats span residues 90–127, 327–363, 397–433, and 434–471; these read DSALLSINTIQKSLNDQSQVIRASALRVMSSIRVIDII, IEAQKVGKSLVRILRSGPEVQYITLTNISTMVTLRPS, ENIGKILKEFKEYVKNEDKKFVAATIQAIGSCASTVP, and DVTESCIYGLMSLLSNQSTVVVAESVIVLKRLLQLNAT. Positions 480 to 490 are enriched in basic and acidic residues; the sequence is KEKEKEKDVKE. Disordered regions lie at residues 480 to 501, 736 to 797, and 811 to 835; these read KEKEKEKDVKENQSTISKHSSS, DEEE…YDGE, and LFGITNDDNNQTANGIGGGGSGEEE. Composition is skewed to acidic residues over residues 736–764 and 780–797; these read DEEEEDEEEYDEEEEEEEYEEQNEYEDFF and YDEDEYNQDIDDGEYDGE.

The protein belongs to the adaptor complexes large subunit family. As to quaternary structure, adaptor protein complex 3 (AP-3) is a heterotetramer composed of two large adaptins (delta-type subunit and beta-type subunit), a medium adaptin (mu-type subunit) and a small adaptin (sigma-type subunit).

The protein resides in the endosome membrane. In terms of biological role, part of the AP-3 complex, an adaptor-related complex which is essential for the compartmentalization of the endocytic pathway. The chain is AP-3 complex subunit beta (ap3b-1) from Dictyostelium discoideum (Social amoeba).